A 208-amino-acid polypeptide reads, in one-letter code: NADH-ubiquinone oxidoreductase chain 4 (208 aa).

Helical transmembrane passes span 23–43, 60–80, 93–113, 114–134, 147–167, and 185–205; these read VWIN…NLLW, PLSA…LLAS, KLYI…FSAN, ELIM…IIIT, IYFL…LIYI, and PINQ…AFMV.

The protein belongs to the complex I subunit 4 family. As to quaternary structure, core subunit of respiratory chain NADH dehydrogenase (Complex I) which is composed of 45 different subunits.

Its subcellular location is the mitochondrion inner membrane. The catalysed reaction is a ubiquinone + NADH + 5 H(+)(in) = a ubiquinol + NAD(+) + 4 H(+)(out). Functionally, core subunit of the mitochondrial membrane respiratory chain NADH dehydrogenase (Complex I) which catalyzes electron transfer from NADH through the respiratory chain, using ubiquinone as an electron acceptor. Essential for the catalytic activity and assembly of complex I. This chain is NADH-ubiquinone oxidoreductase chain 4 (MT-ND4), found in Microtus pennsylvanicus (Meadow vole).